Reading from the N-terminus, the 335-residue chain is DNA-directed RNA polymerase subunit alpha (335 aa).

The segment at Met1–Glu233 is alpha N-terminal domain (alpha-NTD). Residues Lys264 to Asn335 are alpha C-terminal domain (alpha-CTD).

This sequence belongs to the RNA polymerase alpha chain family. In terms of assembly, in plastids the minimal PEP RNA polymerase catalytic core is composed of four subunits: alpha, beta, beta', and beta''. When a (nuclear-encoded) sigma factor is associated with the core the holoenzyme is formed, which can initiate transcription.

Its subcellular location is the plastid. The protein localises to the chloroplast. The catalysed reaction is RNA(n) + a ribonucleoside 5'-triphosphate = RNA(n+1) + diphosphate. Its function is as follows. DNA-dependent RNA polymerase catalyzes the transcription of DNA into RNA using the four ribonucleoside triphosphates as substrates. In Pinus thunbergii (Japanese black pine), this protein is DNA-directed RNA polymerase subunit alpha.